Reading from the N-terminus, the 447-residue chain is Signal recognition particle 54 kDa protein (447 aa).

Residues 105-112 (GVQGSGKT), 187-191 (DTAGR), and 247-250 (TKMD) contribute to the GTP site.

It belongs to the GTP-binding SRP family. SRP54 subfamily. Part of the signal recognition particle protein translocation system, which is composed of SRP and FtsY. Archaeal SRP consists of a 7S RNA molecule of 300 nucleotides and two protein subunits: SRP54 and SRP19.

Its subcellular location is the cytoplasm. It catalyses the reaction GTP + H2O = GDP + phosphate + H(+). Its function is as follows. Involved in targeting and insertion of nascent membrane proteins into the cytoplasmic membrane. Binds to the hydrophobic signal sequence of the ribosome-nascent chain (RNC) as it emerges from the ribosomes. The SRP-RNC complex is then targeted to the cytoplasmic membrane where it interacts with the SRP receptor FtsY. In Hyperthermus butylicus (strain DSM 5456 / JCM 9403 / PLM1-5), this protein is Signal recognition particle 54 kDa protein.